The primary structure comprises 380 residues: Crotonobetainyl-CoA reductase (380 aa).

The protein belongs to the acyl-CoA dehydrogenase family. Homotetramer. It depends on FAD as a cofactor.

The protein resides in the cytoplasm. The catalysed reaction is 4-(trimethylamino)butanoyl-CoA + oxidized [electron-transfer flavoprotein] + H(+) = crotonobetainyl-CoA + reduced [electron-transfer flavoprotein]. It functions in the pathway amine and polyamine metabolism; carnitine metabolism. Its function is as follows. Catalyzes the reduction of crotonobetainyl-CoA to gamma-butyrobetainyl-CoA. This chain is Crotonobetainyl-CoA reductase, found in Escherichia coli O6:K15:H31 (strain 536 / UPEC).